The sequence spans 459 residues: Alcohol acyl transferase 2 (459 aa).

Catalysis depends on proton acceptor residues histidine 164 and asparagine 385.

It belongs to the plant acyltransferase family. Highly expressed in the cortex and skin of ripe fruit.

In terms of biological role, involved in the biosynthesis of volatile esters which confer ripe apple fruit flavor. Alcohol acyl transferase that can use a wide range of alcohols as substrate to produce esters. The chain is Alcohol acyl transferase 2 from Malus domestica (Apple).